The sequence spans 1169 residues: Pesticidal crystal protein Cry8Ba (1169 aa).

Positions 1-26 (MSPNNQNEYEIIDATPSTSVSNDSNR) are disordered. Positions 15 to 25 (TPSTSVSNDSN) are enriched in polar residues.

Belongs to the delta endotoxin family.

Functionally, promotes colloidosmotic lysis by binding to the midgut epithelial cells of insects. Active on various scarabaeid beetles. The sequence is that of Pesticidal crystal protein Cry8Ba (cry8Ba) from Bacillus thuringiensis serovar kumamotoensis.